The chain runs to 1744 residues: Tensin-1 (1744 aa).

A disordered region spans residues 15–55 (SPAVNYELPSPGQSITKQVDTPDATRSPRGGQAHRKASRSM). The region spanning 58 to 230 (TAAMESSCEL…HYFSGLLSGS (173 aa)) is the Phosphatase tensin-type domain. In terms of domain architecture, C2 tensin-type spans 235–361 (NKPLFLHHVI…GKVEFVFSYG (127 aa)). Disordered regions lie at residues 467 to 505 (TLSV…SPEE), 569 to 589 (DELP…SSLD), 666 to 686 (AQEH…PAWL), 724 to 797 (PQAP…APSR), 934 to 956 (GSQQ…QLPH), 982 to 1077 (RVAG…PGLA), and 1156 to 1437 (VPSP…GSAV). Residues 468–481 (LSVSSDSGNSTAST) are compositionally biased toward polar residues. Low complexity predominate over residues 580-589 (GSLGTLSSLD). Residues 728 to 753 (ARSTSSREAVQRGLNSWQQQGGSRPP) are compositionally biased toward polar residues. Residues 763–773 (SHSPSLSSCSP) are compositionally biased toward low complexity. Residues 774–783 (QPSPLQPMPP) show a composition bias toward pro residues. Basic and acidic residues-rich tracts occupy residues 1004–1014 (TPSDSHYEKSS) and 1041–1054 (RPKE…KEAF). The segment covering 1060 to 1069 (ASPSSLTSGG) has biased composition (polar residues). Composition is skewed to low complexity over residues 1156–1169 (VPSP…IHSV) and 1208–1220 (SAHS…SPSS). 3 stretches are compositionally biased toward polar residues: residues 1344–1355 (LSRQSSASGYQP), 1370–1380 (GTSTPHSSSPD), and 1405–1420 (ERSN…NGKA). Over residues 1421-1435 (SSPLSSGMSSPSSGS) the composition is skewed to low complexity. The SH2 domain occupies 1472–1581 (WYKPDISREQ…ALPCKLVIPD (110 aa)). The PTB domain maps to 1607–1743 (ACNVLFINSV…SRVMLGSGQK (137 aa)).

This sequence belongs to the PTEN phosphatase protein family. Binds to actin filaments. Interacts with phosphotyrosine-containing proteins. Post-translationally, tyrosine phosphorylated. Heart, gizzard, lung and skeletal muscle.

It localises to the cell surface. Its subcellular location is the cell junction. The protein resides in the focal adhesion. It is found in the cytoplasm. The protein localises to the cytoskeleton. Its function is as follows. May act as a protein phosphatase and/or a lipid phosphatase. Involved in fibrillar adhesion formation. Plays a role in cell polarization and migration. May be involved in cartilage development and in linking signal transduction pathways to the cytoskeleton. The chain is Tensin-1 (TNS1) from Gallus gallus (Chicken).